We begin with the raw amino-acid sequence, 85 residues long: Small ribosomal subunit protein uS17 (85 aa).

It belongs to the universal ribosomal protein uS17 family. Part of the 30S ribosomal subunit.

In terms of biological role, one of the primary rRNA binding proteins, it binds specifically to the 5'-end of 16S ribosomal RNA. The protein is Small ribosomal subunit protein uS17 of Desulforudis audaxviator (strain MP104C).